A 201-amino-acid chain; its full sequence is Phosphoheptose isomerase (201 aa).

The region spanning 36–195 is the SIS domain; the sequence is IAKSLNEGGK…EDILFEIPAA (160 aa). 51–53 is a substrate binding site; that stretch reads NGG. Residues His60 and Glu64 each coordinate Zn(2+). Substrate is bound by residues Glu64, 93 to 94, 119 to 121, Ser124, and Gln171; these read ND and STS. Zn(2+) contacts are provided by Gln171 and His179.

This sequence belongs to the SIS family. GmhA subfamily. Zn(2+) is required as a cofactor.

It is found in the cytoplasm. It carries out the reaction 2 D-sedoheptulose 7-phosphate = D-glycero-alpha-D-manno-heptose 7-phosphate + D-glycero-beta-D-manno-heptose 7-phosphate. The protein operates within carbohydrate biosynthesis; D-glycero-D-manno-heptose 7-phosphate biosynthesis; D-glycero-alpha-D-manno-heptose 7-phosphate and D-glycero-beta-D-manno-heptose 7-phosphate from sedoheptulose 7-phosphate: step 1/1. Its function is as follows. Catalyzes the isomerization of sedoheptulose 7-phosphate in D-glycero-D-manno-heptose 7-phosphate. In Thermodesulfovibrio yellowstonii (strain ATCC 51303 / DSM 11347 / YP87), this protein is Phosphoheptose isomerase.